Here is a 1453-residue protein sequence, read N- to C-terminus: MGAQDRPQCHFDIEINREPVGRIMFQLFSDICPKTCKNFLCLCSGEKGLGKTTGKKLCYKGSTFHRVVKNFMIQGGDFSEGNGKGGESIYGGYFKDENFILKHDRAFLLSMANRGKHTNGSQFFITTKPAPHLDGVHVVFGLVISGFEVIEQIENLKTDAASRPYADVRVIDCGVLATKLTKDVFEKKRKKPTCSEGSDSSSRSSSSSESSSESEVERETIRRRRHKRRPKVRHAKKRRKEMSSSEEPRRKRTVSPEGYSERSDVNEKRSVDSNTKREKPVVRPEEIPPVPENRFLLRRDMPAITVEPEQNIPDVAPVVSDQKPSVSKSGRKIKGRGTIRYHTPPRSRSHSESKDDDSSETPPHWKEEMQRLRAYRPPSGEKWSKGDKLSDPCSSRWDERSLSQRSRSWSYNGYYSDLSTARHSDGHHKKHRKEKKFKHKKKAKKQKHCRRHRQTKKRRIVMPDLEPSRSPTHRMKSSCVRERRSRASSSSSHHSSKRDWSKSDQDDGSASTHSSRDSYRSKSHSRSDSRGSSRSRAVSKSSSRSLNRSKSRSSSRSGPRRTSISPKKPAQLSENKPVKTEPLRPSVPQNGNVLVQPVAAENIPVIPLSDSPPPSRWKPGQKPWKPSYERIQEMKAKTTHLLPVQSTYSLTNIKATVSSSSYHKREKPSESDGSAYSKYSDRSSGSSGRSGSKSSRSRSSSRSYTRSRSRSLPTSRSLSRSPSSRSHSPNKYSDGSQHSRSSSYTSVSSDDGRRAMFRSNRKKSVTSHKRHRSNSEKTLHSKYVRGREKSSRHRKYSESRSSLDYSSDSDQSHVQVYSAPEKEKQGKVEALNDKQGKGREEGKPKPEWECPRSKKRTPKDHSRDDSVSKGKNCAGSKWDSESNSEQDVTKSRKSDPRRGSEKEEGEASSDSESEVGQSHIKAKPPAKPPTSTFLPGSDGAWKSRRPQSSASESESSCSNLGNIRGEPQKQKHSKDDLKGDHTKRAREKSKAKKDKKHKAPKRKQAFHWQPPLEFGDDEEEEMNGKQVTQDPKEKRHVSEKCEAVKDGIPNVEKTCDEGSSPSKPKKGTLEQDPLAEGGHDPSSCPAPLKVEDNTASSPPSAQHLEEHGPGGGEDVLQTDDNMEICTPDRTSPAKGEVVSPLANHRLDSPEVNIIPEQDECMAHPRAGGEQESSMSESKTLGESGVKQDSSTSVTSPVETSGKKEGAEKSQMNLTDKWKPLQGVGNLSVSTATTSSALDVKALSTVPEVKPQGLRIEIKSKNKVRPGSLFDEVRKTARLNRRPRNQESSSDDQTPSRDGDSQSRSPHRSRSKSETKSRHRTRSVSYSHSRSRSRSSTSSYRSRSYSRSRSRDWYSRGRTRSRSSSYGSFHSHRTSSRSRSRSSSYDLHSRSRSYTYDSYYSRSRSRSRSQRSDSYHRGRSYNRRSRSGRSYGSDSESDRSYSHHRSPSESSRYS.

A PPIase cyclophilin-type domain is found at 10-175; it reads HFDIEINREP…ADVRVIDCGV (166 aa). The interval 187–625 is disordered; the sequence is KKRKKPTCSE…RWKPGQKPWK (439 aa). A compositionally biased stretch (low complexity) spans 195–213; that stretch reads SEGSDSSSRSSSSSESSSE. A compositionally biased stretch (basic residues) spans 221-240; the sequence is IRRRRHKRRPKVRHAKKRRK. Residues 259–286 are compositionally biased toward basic and acidic residues; that stretch reads YSERSDVNEKRSVDSNTKREKPVVRPEE. A Glycyl lysine isopeptide (Lys-Gly) (interchain with G-Cter in SUMO2) cross-link involves residue Lys-323. A compositionally biased stretch (basic residues) spans 329–348; it reads SGRKIKGRGTIRYHTPPRSR. Phosphoserine occurs at positions 379, 401, and 416. The segment covering 382 to 402 has biased composition (basic and acidic residues); it reads KWSKGDKLSDPCSSRWDERSL. Positions 403–421 are enriched in polar residues; the sequence is SQRSRSWSYNGYYSDLSTA. Positions 425-460 are enriched in basic residues; sequence DGHHKKHRKEKKFKHKKKAKKQKHCRRHRQTKKRRI. Residues 514–531 are compositionally biased toward basic and acidic residues; sequence SSRDSYRSKSHSRSDSRG. Composition is skewed to low complexity over residues 532–546 and 554–565; these read SSRS…SRSL and SSRSGPRRTSIS. Residues Lys-576 and Lys-579 each participate in a glycyl lysine isopeptide (Lys-Gly) (interchain with G-Cter in SUMO2) cross-link. Residue Ser-611 is modified to Phosphoserine. A Glycyl lysine isopeptide (Lys-Gly) (interchain with G-Cter in SUMO2) cross-link involves residue Lys-637. Ser-646 is modified (phosphoserine). Polar residues predominate over residues 651 to 661; it reads TNIKATVSSSS. A disordered region spans residues 651–1453; that stretch reads TNIKATVSSS…RSPSESSRYS (803 aa). Residues Lys-654 and Lys-664 each participate in a glycyl lysine isopeptide (Lys-Gly) (interchain with G-Cter in SUMO2) cross-link. Low complexity-rich tracts occupy residues 682–726 and 736–749; these read RSSG…SSRS and SQHS…SVSS. Over residues 755 to 772 the composition is skewed to basic residues; sequence AMFRSNRKKSVTSHKRHR. Residues 773–789 show a composition bias toward basic and acidic residues; that stretch reads SNSEKTLHSKYVRGREK. Positions 799–809 are enriched in low complexity; the sequence is SRSSLDYSSDS. Basic and acidic residues-rich tracts occupy residues 820-852 and 859-868; these read PEKE…ECPR and KDHSRDDSVS. A phosphoserine mark is found at Ser-880, Ser-882, Ser-884, and Ser-900. Over residues 887–902 the composition is skewed to basic and acidic residues; that stretch reads DVTKSRKSDPRRGSEK. A compositionally biased stretch (acidic residues) spans 903–913; the sequence is EEGEASSDSES. The span at 948 to 958 shows a compositional bias: low complexity; sequence SSASESESSCS. Residues 966-982 show a composition bias toward basic and acidic residues; it reads EPQKQKHSKDDLKGDHT. Over residues 983–1005 the composition is skewed to basic residues; that stretch reads KRAREKSKAKKDKKHKAPKRKQA. A compositionally biased stretch (basic and acidic residues) spans 1030-1045; the sequence is DPKEKRHVSEKCEAVK. Phosphoserine occurs at positions 1139 and 1148. Polar residues predominate over residues 1170 to 1180; that stretch reads QESSMSESKTL. Residues 1189–1199 show a composition bias toward low complexity; that stretch reads SSTSVTSPVET. Ser-1195 is modified (phosphoserine). Glycyl lysine isopeptide (Lys-Gly) (interchain with G-Cter in SUMO2) cross-links involve residues Lys-1208 and Lys-1249. The interval 1303 to 1453 is arg/Ser tandem repeat-rich; it reads RSPHRSRSKS…RSPSESSRYS (151 aa). Positions 1322 to 1346 are enriched in low complexity; sequence SVSYSHSRSRSRSSTSSYRSRSYSR. A compositionally biased stretch (basic residues) spans 1369–1379; sequence HSHRTSSRSRS. Residues 1380–1401 show a composition bias toward low complexity; the sequence is RSSSYDLHSRSRSYTYDSYYSR. A compositionally biased stretch (basic residues) spans 1416–1426; sequence RGRSYNRRSRS.

It localises to the cell membrane. The enzyme catalyses [protein]-peptidylproline (omega=180) = [protein]-peptidylproline (omega=0). Inhibited by cyclosporin A (CsA). PPIase that catalyzes the cis-trans isomerization of proline imidic peptide bonds in oligopeptides and may therefore assist protein folding. Component of a putative tumor-recognition complex involved in the function of NK cells. The protein is NK-tumor recognition protein of Mus musculus (Mouse).